Reading from the N-terminus, the 152-residue chain is Ribosome maturation factor RimP (152 aa).

Belongs to the RimP family.

Its subcellular location is the cytoplasm. Functionally, required for maturation of 30S ribosomal subunits. In Brevibacillus brevis (strain 47 / JCM 6285 / NBRC 100599), this protein is Ribosome maturation factor RimP.